Reading from the N-terminus, the 496-residue chain is Genome polyprotein (496 aa).

Residues 1 to 447 (SRCTHLENRD…HTVLGGAFNS (447 aa)) lie on the Extracellular side of the membrane. 6 disulfide bridges follow: Cys-3–Cys-30, Cys-60–Cys-116, Cys-60–Cys-121, Cys-74–Cys-105, Cys-92–Cys-116, and Cys-92–Cys-121. Residues 98–111 (DRGWGNHCGLFGKG) form a fusion peptide region. N-linked (GlcNAc...) asparagine; by host glycosylation is present at Asn-154. 2 disulfide bridges follow: Cys-186–Cys-290 and Cys-307–Cys-338. The chain crosses the membrane as a helical span at residues 448–468 (IFGGVGFLPKLLMGVALAWLG). The Cytoplasmic segment spans residues 469 to 479 (LNTRNPTMSIS). A helical transmembrane segment spans residues 480-496 (FLLTGGLVLAMTLGVGA).

Homodimer; in the endoplasmic reticulum and Golgi. N-glycosylated.

It is found in the virion membrane. It localises to the host endoplasmic reticulum membrane. Its function is as follows. Binds to host cell surface receptor and mediates fusion between viral and cellular membranes. Envelope protein is synthesized in the endoplasmic reticulum in the form of heterodimer with protein prM. They play a role in virion budding in the ER, and the newly formed immature particle is covered with 60 spikes composed of heterodimer between precursor prM and envelope protein E. The virion is transported to the Golgi apparatus where the low pH causes dissociation of PrM-E heterodimers and formation of E homodimers. prM-E cleavage is ineficient, and many virions are only partially matured. These uncleaved prM would play a role in immune evasion. The chain is Genome polyprotein from Louping ill virus (strain SB 526) (Li).